The primary structure comprises 264 residues: S-adenosylmethionine decarboxylase proenzyme (264 aa).

Residue Ser113 is the Schiff-base intermediate with substrate; via pyruvic acid of the active site. At Ser113 the chain carries Pyruvic acid (Ser); by autocatalysis. His118 functions as the Proton acceptor; for processing activity in the catalytic mechanism. Cys141 (proton donor; for catalytic activity) is an active-site residue.

The protein belongs to the prokaryotic AdoMetDC family. Type 2 subfamily. As to quaternary structure, heterooctamer of four alpha and four beta chains arranged as a tetramer of alpha/beta heterodimers. The cofactor is pyruvate. Is synthesized initially as an inactive proenzyme. Formation of the active enzyme involves a self-maturation process in which the active site pyruvoyl group is generated from an internal serine residue via an autocatalytic post-translational modification. Two non-identical subunits are generated from the proenzyme in this reaction, and the pyruvate is formed at the N-terminus of the alpha chain, which is derived from the carboxyl end of the proenzyme. The post-translation cleavage follows an unusual pathway, termed non-hydrolytic serinolysis, in which the side chain hydroxyl group of the serine supplies its oxygen atom to form the C-terminus of the beta chain, while the remainder of the serine residue undergoes an oxidative deamination to produce ammonia and the pyruvoyl group blocking the N-terminus of the alpha chain.

It catalyses the reaction S-adenosyl-L-methionine + H(+) = S-adenosyl 3-(methylsulfanyl)propylamine + CO2. It functions in the pathway amine and polyamine biosynthesis; S-adenosylmethioninamine biosynthesis; S-adenosylmethioninamine from S-adenosyl-L-methionine: step 1/1. Functionally, catalyzes the decarboxylation of S-adenosylmethionine to S-adenosylmethioninamine (dcAdoMet), the propylamine donor required for the synthesis of the polyamines spermine and spermidine from the diamine putrescine. The chain is S-adenosylmethionine decarboxylase proenzyme from Xanthomonas oryzae pv. oryzae (strain MAFF 311018).